The primary structure comprises 303 residues: uncharacterized protein (303 aa).

This is an uncharacterized protein from Rickettsia prowazekii (strain Madrid E).